The primary structure comprises 348 residues: Photosystem II protein D1 (348 aa).

3 consecutive transmembrane segments (helical) span residues 33–50 (YIGW…LATV), 122–137 (HFIF…EWEF), and 146–160 (WIFV…AASA). H122 contacts chlorophyll a. Y130 lines the pheophytin a pocket. Residues D174 and E193 each coordinate [CaMn4O5] cluster. The helical transmembrane segment at 201-222 (FHILGVAAVFGGSLFSAMHGSL) threads the bilayer. Chlorophyll a is bound at residue H202. A quinone is bound by residues H219 and 268–269 (SF). H219 lines the Fe cation pocket. Position 276 (H276) interacts with Fe cation. Residues 278-292 (FLAAWPVIGIWFTSL) form a helical membrane-spanning segment. Residues H336, E337, D346, and A348 each contribute to the [CaMn4O5] cluster site.

This sequence belongs to the reaction center PufL/M/PsbA/D family. PSII is composed of 1 copy each of membrane proteins PsbA, PsbB, PsbC, PsbD, PsbE, PsbF, PsbH, PsbI, PsbJ, PsbK, PsbL, PsbM, PsbT, PsbX, PsbY, PsbZ, Psb30/Ycf12, at least 3 peripheral proteins of the oxygen-evolving complex and a large number of cofactors. It forms dimeric complexes. It depends on The D1/D2 heterodimer binds P680, chlorophylls that are the primary electron donor of PSII, and subsequent electron acceptors. It shares a non-heme iron and each subunit binds pheophytin, quinone, additional chlorophylls, carotenoids and lipids. D1 provides most of the ligands for the Mn4-Ca-O5 cluster of the oxygen-evolving complex (OEC). There is also a Cl(-1) ion associated with D1 and D2, which is required for oxygen evolution. The PSII complex binds additional chlorophylls, carotenoids and specific lipids. as a cofactor. In terms of processing, tyr-165 forms a radical intermediate that is referred to as redox-active TyrZ, YZ or Y-Z.

Its subcellular location is the plastid. It localises to the chloroplast thylakoid membrane. It carries out the reaction 2 a plastoquinone + 4 hnu + 2 H2O = 2 a plastoquinol + O2. Its function is as follows. Photosystem II (PSII) is a light-driven water:plastoquinone oxidoreductase that uses light energy to abstract electrons from H(2)O, generating O(2) and a proton gradient subsequently used for ATP formation. It consists of a core antenna complex that captures photons, and an electron transfer chain that converts photonic excitation into a charge separation. The D1/D2 (PsbA/PsbD) reaction center heterodimer binds P680, the primary electron donor of PSII as well as several subsequent electron acceptors. The chain is Photosystem II protein D1 from Heterocapsa triquetra (Dinoflagellate).